We begin with the raw amino-acid sequence, 171 residues long: S-ribosylhomocysteine lyase (171 aa).

Fe cation-binding residues include H54, H58, and C128.

The protein belongs to the LuxS family. As to quaternary structure, homodimer. The cofactor is Fe cation.

The catalysed reaction is S-(5-deoxy-D-ribos-5-yl)-L-homocysteine = (S)-4,5-dihydroxypentane-2,3-dione + L-homocysteine. Its function is as follows. Involved in the synthesis of autoinducer 2 (AI-2) which is secreted by bacteria and is used to communicate both the cell density and the metabolic potential of the environment. The regulation of gene expression in response to changes in cell density is called quorum sensing. Catalyzes the transformation of S-ribosylhomocysteine (RHC) to homocysteine (HC) and 4,5-dihydroxy-2,3-pentadione (DPD). This Aliarcobacter butzleri (strain RM4018) (Arcobacter butzleri) protein is S-ribosylhomocysteine lyase.